The chain runs to 938 residues: Probable glutamyl endopeptidase, chloroplastic (938 aa).

The N-terminal 54 residues, 1-54 (MSSLTILLQRACLRFALLPVPPLRAPLRPPRRPLGLPRRSAMSSSAASRLSHIV), are a transit peptide targeting the chloroplast. A compositionally biased stretch (low complexity) spans 58 to 76 (GGAAGESSEPPAAAAAASG). The tract at residues 58 to 77 (GGAAGESSEPPAAAAAASGL) is disordered. Residues serine 762, aspartate 836, and histidine 870 each act as charge relay system in the active site. Polar residues predominate over residues 897–913 (SSKTDSDSVADTENKTV). The segment at 897-938 (SSKTDSDSVADTENKTVSASGGGAPCEGPEAEGFSSMQRSLL) is disordered.

Belongs to the peptidase S9D family.

The protein resides in the plastid. It is found in the chloroplast stroma. Serine-type protease active in vitro against the LHCII N-terminal. Cleaves its substrate on the carboxy-side of Glu residues. The protein is Probable glutamyl endopeptidase, chloroplastic (GEP) of Oryza sativa subsp. japonica (Rice).